We begin with the raw amino-acid sequence, 153 residues long: Cyanate hydratase (153 aa).

Catalysis depends on residues arginine 88, glutamate 91, and serine 114.

This sequence belongs to the cyanase family.

It catalyses the reaction cyanate + hydrogencarbonate + 3 H(+) = NH4(+) + 2 CO2. In terms of biological role, catalyzes the reaction of cyanate with bicarbonate to produce ammonia and carbon dioxide. The sequence is that of Cyanate hydratase from Mycolicibacterium vanbaalenii (strain DSM 7251 / JCM 13017 / BCRC 16820 / KCTC 9966 / NRRL B-24157 / PYR-1) (Mycobacterium vanbaalenii).